A 492-amino-acid chain; its full sequence is Ketol-acid reductoisomerase (NADP(+)) (492 aa).

The KARI N-terminal Rossmann domain maps to 17–208; that stretch reads LGVCEFMDRS…GGDRAGVLKS (192 aa). Residues 45 to 48, arginine 68, arginine 76, serine 78, and 108 to 110 contribute to the NADP(+) site; these read CGAQ and DKQ. Residue histidine 132 is part of the active site. Glycine 158 contacts NADP(+). KARI C-terminal knotted domains lie at 209-353 and 354-487; these read SFVA…AEQE and YYDN…MTEM. The Mg(2+) site is built by aspartate 217, glutamate 221, glutamate 389, and glutamate 393. Residue serine 414 coordinates substrate.

Belongs to the ketol-acid reductoisomerase family. It depends on Mg(2+) as a cofactor.

It carries out the reaction (2R)-2,3-dihydroxy-3-methylbutanoate + NADP(+) = (2S)-2-acetolactate + NADPH + H(+). The enzyme catalyses (2R,3R)-2,3-dihydroxy-3-methylpentanoate + NADP(+) = (S)-2-ethyl-2-hydroxy-3-oxobutanoate + NADPH + H(+). It participates in amino-acid biosynthesis; L-isoleucine biosynthesis; L-isoleucine from 2-oxobutanoate: step 2/4. The protein operates within amino-acid biosynthesis; L-valine biosynthesis; L-valine from pyruvate: step 2/4. Functionally, involved in the biosynthesis of branched-chain amino acids (BCAA). Catalyzes an alkyl-migration followed by a ketol-acid reduction of (S)-2-acetolactate (S2AL) to yield (R)-2,3-dihydroxy-isovalerate. In the isomerase reaction, S2AL is rearranged via a Mg-dependent methyl migration to produce 3-hydroxy-3-methyl-2-ketobutyrate (HMKB). In the reductase reaction, this 2-ketoacid undergoes a metal-dependent reduction by NADPH to yield (R)-2,3-dihydroxy-isovalerate. The protein is Ketol-acid reductoisomerase (NADP(+)) of Cytophaga hutchinsonii (strain ATCC 33406 / DSM 1761 / CIP 103989 / NBRC 15051 / NCIMB 9469 / D465).